The primary structure comprises 285 residues: 4-hydroxybenzoate octaprenyltransferase (285 aa).

The next 7 helical transmembrane spans lie at 20-37 (IGIY…WLAA), 96-116 (FFFV…PFTI), 138-158 (WPQA…FAAI), 166-186 (AWVI…AYAV), 211-231 (IIGF…DLFG), 234-254 (WLYY…QYLL), and 262-282 (AFKA…GIML).

Belongs to the UbiA prenyltransferase family. The cofactor is Mg(2+).

The protein resides in the cell inner membrane. The enzyme catalyses all-trans-octaprenyl diphosphate + 4-hydroxybenzoate = 4-hydroxy-3-(all-trans-octaprenyl)benzoate + diphosphate. It functions in the pathway cofactor biosynthesis; ubiquinone biosynthesis. Catalyzes the prenylation of para-hydroxybenzoate (PHB) with an all-trans polyprenyl group. Mediates the second step in the final reaction sequence of ubiquinone-8 (UQ-8) biosynthesis, which is the condensation of the polyisoprenoid side chain with PHB, generating the first membrane-bound Q intermediate 3-octaprenyl-4-hydroxybenzoate. This chain is 4-hydroxybenzoate octaprenyltransferase, found in Hydrogenovibrio crunogenus (strain DSM 25203 / XCL-2) (Thiomicrospira crunogena).